A 608-amino-acid polypeptide reads, in one-letter code: Glutamyl-tRNA(Gln) amidotransferase subunit E (608 aa).

The tract at residues 402 to 422 (EETRGANPDGTTRFLRPRPGA) is disordered.

The protein belongs to the GatB/GatE family. GatE subfamily. In terms of assembly, heterodimer of GatD and GatE.

The enzyme catalyses L-glutamyl-tRNA(Gln) + L-glutamine + ATP + H2O = L-glutaminyl-tRNA(Gln) + L-glutamate + ADP + phosphate + H(+). Its function is as follows. Allows the formation of correctly charged Gln-tRNA(Gln) through the transamidation of misacylated Glu-tRNA(Gln) in organisms which lack glutaminyl-tRNA synthetase. The reaction takes place in the presence of glutamine and ATP through an activated gamma-phospho-Glu-tRNA(Gln). The GatDE system is specific for glutamate and does not act on aspartate. This Pyrobaculum calidifontis (strain DSM 21063 / JCM 11548 / VA1) protein is Glutamyl-tRNA(Gln) amidotransferase subunit E.